Here is a 204-residue protein sequence, read N- to C-terminus: ATP phosphoribosyltransferase (204 aa).

The protein belongs to the ATP phosphoribosyltransferase family. Short subfamily. In terms of assembly, heteromultimer composed of HisG and HisZ subunits.

The protein localises to the cytoplasm. The catalysed reaction is 1-(5-phospho-beta-D-ribosyl)-ATP + diphosphate = 5-phospho-alpha-D-ribose 1-diphosphate + ATP. Its pathway is amino-acid biosynthesis; L-histidine biosynthesis; L-histidine from 5-phospho-alpha-D-ribose 1-diphosphate: step 1/9. Catalyzes the condensation of ATP and 5-phosphoribose 1-diphosphate to form N'-(5'-phosphoribosyl)-ATP (PR-ATP). Has a crucial role in the pathway because the rate of histidine biosynthesis seems to be controlled primarily by regulation of HisG enzymatic activity. The protein is ATP phosphoribosyltransferase of Staphylococcus aureus (strain USA300).